The sequence spans 506 residues: MPLLGLLPRRAWASLLSQLLRPPCASCTGAVRCQSQVAEAVLTSQLKAHQEKPNFIIKTPKGTRDLSPQHMVVREKILDLVISCFKRHGAKGMDTPAFELKETLTEKYGEDSGLMYDLKDQGGELLSLRYDLTVPFARYLAMNKVKKMKRYHVGKVWRRESPTIVQGRYREFCQCDFDIAGQFDPMIPDAECLKIMCEILSGLQLGDFLIKVNDRRIVDGMFAVCGVPESKFRAICSSIDKLDKMAWKDVRHEMVVKKGLAPEVADRIGDYVQCHGGVSLVEQMFQDPRLSQNKQALEGLGDLKLLFEYLTLFGIADKISFDLSLARGLDYYTGVIYEAVLLQTPTQAGEEPLNVGSVAAGGRYDGLVGMFDPKGHKVPCVGLSIGVERIFYIVEQRMKTKGEKVRTTETQVFVATPQKNFLQERLKLIAELWDSGIKAEMLYKNNPKLLTQLHYCESTGIPLVVIIGEQELKEGVIKIRSVASREEVAIKRENFVAEIQKRLSES.

A mitochondrion-targeting transit peptide spans 1–33; the sequence is MPLLGLLPRRAWASLLSQLLRPPCASCTGAVRC. Ser67 bears the Phosphoserine mark. L-histidine is bound by residues 131-133, Arg158, Gln174, Asp178, Arg327, and 331-332; these read DLT and YY. N6-acetyllysine is present on Lys444.

This sequence belongs to the class-II aminoacyl-tRNA synthetase family. As to quaternary structure, homodimer. As to expression, a high level expression is seen in the heart, kidney and skeletal muscle while a lower level expression is seen in the brain and liver.

Its subcellular location is the mitochondrion. The enzyme catalyses tRNA(His) + L-histidine + ATP = L-histidyl-tRNA(His) + AMP + diphosphate + H(+). Its function is as follows. Mitochondrial aminoacyl-tRNA synthetase that catalyzes the ATP-dependent ligation of histidine to the 3'-end of its cognate tRNA, via the formation of an aminoacyl-adenylate intermediate (His-AMP). The protein is Histidine--tRNA ligase, mitochondrial (HARS2) of Homo sapiens (Human).